The primary structure comprises 64 residues: Protein YnhH (64 aa).

The sequence is that of Protein YnhH from Escherichia coli (strain K12).